A 369-amino-acid polypeptide reads, in one-letter code: CASP-like protein 4U1 (369 aa).

Positions methionine 1–serine 162 are disordered. Residues methionine 1 to glutamate 222 lie on the Cytoplasmic side of the membrane. The span at threonine 7–proline 23 shows a compositional bias: pro residues. The segment covering serine 36–alanine 51 has biased composition (basic and acidic residues). Low complexity-rich tracts occupy residues alanine 87–glutamate 96 and serine 114–proline 127. A helical membrane pass occupies residues leucine 223–alanine 243. The Extracellular portion of the chain corresponds to serine 244–arginine 262. The helical transmembrane segment at tyrosine 263 to isoleucine 283 threads the bilayer. Residues arginine 284–tyrosine 300 are Cytoplasmic-facing. Residues cysteine 301 to alanine 321 form a helical membrane-spanning segment. Residues serine 322–lysine 339 are Extracellular-facing. A helical transmembrane segment spans residues isoleucine 340–isoleucine 360. Over serine 361–valine 369 the chain is Cytoplasmic.

The protein belongs to the Casparian strip membrane proteins (CASP) family. Homodimer and heterodimers.

It localises to the cell membrane. The protein is CASP-like protein 4U1 of Zea mays (Maize).